The primary structure comprises 159 residues: 17 kDa surface antigen (159 aa).

A signal peptide spans 1-19 (MKLLSKIMIIALATSMLQA). Cys20 carries the N-palmitoyl cysteine lipid modification. Residue Cys20 is the site of S-diacylglycerol cysteine attachment.

This sequence belongs to the rickettsiale 17 kDa surface antigen family.

The protein localises to the cell outer membrane. The protein is 17 kDa surface antigen (omp) of Rickettsia japonica (strain ATCC VR-1363 / YH).